The chain runs to 673 residues: DNA ligase (673 aa).

NAD(+) is bound by residues 38-42 (DSVYD), 87-88 (SL), and Glu-119. The N6-AMP-lysine intermediate role is filled by Lys-121. 4 residues coordinate NAD(+): Arg-142, Glu-179, Lys-296, and Lys-320. Residues Cys-414, Cys-417, Cys-432, and Cys-438 each coordinate Zn(2+). The region spanning 595–673 (VVKSEIAGKT…EEAFLKLLKS (79 aa)) is the BRCT domain.

This sequence belongs to the NAD-dependent DNA ligase family. LigA subfamily. It depends on Mg(2+) as a cofactor. Requires Mn(2+) as cofactor.

The enzyme catalyses NAD(+) + (deoxyribonucleotide)n-3'-hydroxyl + 5'-phospho-(deoxyribonucleotide)m = (deoxyribonucleotide)n+m + AMP + beta-nicotinamide D-nucleotide.. In terms of biological role, DNA ligase that catalyzes the formation of phosphodiester linkages between 5'-phosphoryl and 3'-hydroxyl groups in double-stranded DNA using NAD as a coenzyme and as the energy source for the reaction. It is essential for DNA replication and repair of damaged DNA. The chain is DNA ligase from Coxiella burnetii (strain CbuK_Q154) (Coxiella burnetii (strain Q154)).